A 957-amino-acid chain; its full sequence is Glycine dehydrogenase (decarboxylating) (957 aa).

At K708 the chain carries N6-(pyridoxal phosphate)lysine.

This sequence belongs to the GcvP family. In terms of assembly, the glycine cleavage system is composed of four proteins: P, T, L and H. Pyridoxal 5'-phosphate serves as cofactor.

The enzyme catalyses N(6)-[(R)-lipoyl]-L-lysyl-[glycine-cleavage complex H protein] + glycine + H(+) = N(6)-[(R)-S(8)-aminomethyldihydrolipoyl]-L-lysyl-[glycine-cleavage complex H protein] + CO2. The glycine cleavage system catalyzes the degradation of glycine. The P protein binds the alpha-amino group of glycine through its pyridoxal phosphate cofactor; CO(2) is released and the remaining methylamine moiety is then transferred to the lipoamide cofactor of the H protein. This is Glycine dehydrogenase (decarboxylating) from Escherichia coli (strain SE11).